The sequence spans 619 residues: MDDQQALNSIMQDLAVLHKASRPALSLQETRKAKSSSPKKQNDVRVKFEHRGEKRILQFPRPVKLEDLRSKAKIAFGQSMDLHYTNNELVIPLTTQDDLDKAVELLDRSIHMKSLKILLVINGSTQATNLEPLPSLEDLDNTVFGAERKKRLSIIGPTSRDRSSPPPGYIPDELHQVARNGSFTSINSEGEFIPESMDQMLDPLSLSSPENSGSGSCPSLDSPLDGESYPKSRMPRAQSYPDNHQEFSDYDNPIFEKFGKGGTYPRRYHVSYHHQEYNDGRKTFPRARRTQGTSLRSPVSFSPTDHSLSTSSGSSIFTPEYDDSRIRRRGSDIDNPTLTVMDISPPSRSPRAPTNWRLGKLLGQGAFGRVYLCYDVDTGRELAVKQVQFDPDSPETSKEVNALECEIQLLKNLLHERIVQYYGCLRDPQEKTLSIFMEYMPGGSIKDQLKAYGALTENVTRKYTRQILEGVHYLHSNMIVHRDIKGANILRDSTGNVKLGDFGASKRLQTICLSGTGMKSVTGTPYWMSPEVISGEGYGRKADIWSVACTVVEMLTEKPPWAEFEAMAAIFKIATQPTNPKLPPHVSDYTRDFLKRIFVEAKLRPSADELLRHMFVHYH.

The segment at 25–45 is disordered; sequence LSLQETRKAKSSSPKKQNDVR. Serine 26 is modified (phosphoserine). Residues 43 to 122 enclose the PB1 domain; it reads DVRVKFEHRG…KSLKILLVIN (80 aa). A phosphoserine mark is found at serine 153, serine 159, and serine 164. Disordered stretches follow at residues 154–173, 201–248, and 289–355; these read IIGP…IPDE, LDPL…QEFS, and RTQG…APTN. Positions 203 to 219 are enriched in low complexity; it reads PLSLSSPENSGSGSCPS. A phosphoserine mark is found at serine 239, serine 297, serine 311, serine 331, serine 344, and serine 349. Positions 290-299 are enriched in polar residues; the sequence is TQGTSLRSPV. Residues 300 to 315 show a composition bias toward low complexity; it reads SFSPTDHSLSTSSGSS. A compositionally biased stretch (basic and acidic residues) spans 322-332; that stretch reads DDSRIRRRGSD. In terms of domain architecture, Protein kinase spans 357–617; it reads RLGKLLGQGA…DELLRHMFVH (261 aa). Residues 362 to 371 and lysine 385 each bind ATP; that span reads LGQGAFGRVY. Aspartate 483 serves as the catalytic Proton acceptor.

The protein belongs to the protein kinase superfamily. STE Ser/Thr protein kinase family. MAP kinase kinase kinase subfamily. In terms of assembly, interacts with PKN2; the interaction activates PKN2 kinase activity in a MAP3K2-independent kinase activity. Self-associates. Binds both upstream activators and downstream substrates in multimolecular complexes. Interacts (via the kinase catalytic domain) with STK38. Interacts with XIAP/BIRC4. Mg(2+) serves as cofactor. Post-translationally, autophosphorylated. In terms of processing, ubiquitination by XIAP/BIRC4 does not lead to proteasomal degradation.

It is found in the cytoplasm. The protein resides in the nucleus. The catalysed reaction is L-seryl-[protein] + ATP = O-phospho-L-seryl-[protein] + ADP + H(+). It catalyses the reaction L-threonyl-[protein] + ATP = O-phospho-L-threonyl-[protein] + ADP + H(+). Its activity is regulated as follows. Activated by phosphorylation on Thr-524. Its function is as follows. Component of a protein kinase signal transduction cascade. Regulates the JNK and ERK5 pathways by phosphorylating and activating MAP2K5 and MAP2K7. Plays a role in caveolae kiss-and-run dynamics. In Homo sapiens (Human), this protein is Mitogen-activated protein kinase kinase kinase 2 (MAP3K2).